A 449-amino-acid chain; its full sequence is Immunoglobulin gamma-1 heavy chain (449 aa).

Position 1 is a pyrrolidone carboxylic acid (Q1). Ig-like domains follow at residues 1–96, 125–218, 240–339, and 348–444; these read QVQL…VYYC, PSVF…KKVE, PSVF…KTIS, and PQVY…KSLS. The tract at residues 1-119 is variable (V) domain, involved in antigen recognition; it reads QVQLVQSGGG…GQGTLVTVSS (119 aa). 4 disulfides stabilise this stretch: C22–C96, C146–C202, C263–C323, and C369–C427. The N-linked (GlcNAc...) asparagine glycan is linked to N73. The interval 120-449 is constant (C) domain; it reads ASTKGPSVFP…QKSLSLSPGK (330 aa). The N-linked (GlcNAc...) (complex) asparagine glycan is linked to N299.

In terms of assembly, immunoglobulins are composed of two identical heavy chains and two identical light chains; disulfide-linked.

It is found in the secreted. The protein localises to the cell membrane. Immunoglobulins, also known as antibodies, are membrane-bound or secreted glycoproteins produced by B lymphocytes. In the recognition phase of humoral immunity, the membrane-bound immunoglobulins serve as receptors which, upon binding of a specific antigen, trigger the clonal expansion and differentiation of B lymphocytes into immunoglobulins-secreting plasma cells. Secreted immunoglobulins mediate the effector phase of humoral immunity, which results in the elimination of bound antigens. The antigen binding site is formed by the variable domain of one heavy chain, together with that of its associated light chain. Thus, each immunoglobulin has two antigen binding sites with remarkable affinity for a particular antigen. The variable domains are assembled by a process called V-(D)-J rearrangement and can then be subjected to somatic hypermutations which, after exposure to antigen and selection, allow affinity maturation for a particular antigen. The chain is Immunoglobulin gamma-1 heavy chain from Homo sapiens (Human).